Reading from the N-terminus, the 198-residue chain is Acyl carrier protein phosphodiesterase (198 aa).

The protein belongs to the AcpH family.

The catalysed reaction is holo-[ACP] + H2O = apo-[ACP] + (R)-4'-phosphopantetheine + H(+). In terms of biological role, converts holo-ACP to apo-ACP by hydrolytic cleavage of the phosphopantetheine prosthetic group from ACP. The chain is Acyl carrier protein phosphodiesterase from Photorhabdus laumondii subsp. laumondii (strain DSM 15139 / CIP 105565 / TT01) (Photorhabdus luminescens subsp. laumondii).